A 206-amino-acid chain; its full sequence is Methylthioribulose-1-phosphate dehydratase (206 aa).

2 residues coordinate Zn(2+): histidine 96 and histidine 98.

It belongs to the aldolase class II family. MtnB subfamily. It depends on Zn(2+) as a cofactor.

It carries out the reaction 5-(methylsulfanyl)-D-ribulose 1-phosphate = 5-methylsulfanyl-2,3-dioxopentyl phosphate + H2O. It participates in amino-acid biosynthesis; L-methionine biosynthesis via salvage pathway; L-methionine from S-methyl-5-thio-alpha-D-ribose 1-phosphate: step 2/6. Catalyzes the dehydration of methylthioribulose-1-phosphate (MTRu-1-P) into 2,3-diketo-5-methylthiopentyl-1-phosphate (DK-MTP-1-P). This is Methylthioribulose-1-phosphate dehydratase from Azotobacter vinelandii (strain DJ / ATCC BAA-1303).